The sequence spans 260 residues: Adenosylcobinamide-GDP ribazoletransferase (260 aa).

7 helical membrane-spanning segments follow: residues 42 to 62 (TWALPVAGLLVGLAGALVYKI), 68 to 88 (LTPNLAALLALATTALITGAL), 118 to 137 (IGTYGVCALILSFGLRWSAL), 144 to 166 (WLVTLALCAAHCAARAGVPAFMS), 180 to 200 (AGAPPGRSVAIAFAVGTLVLT), 201 to 221 (LALGPGKALVGLILLSLAGLI), and 237 to 257 (ILGAFEQTGEIVILLVAAAFQ).

Belongs to the CobS family. Mg(2+) is required as a cofactor.

The protein localises to the cell inner membrane. The catalysed reaction is alpha-ribazole + adenosylcob(III)inamide-GDP = adenosylcob(III)alamin + GMP + H(+). The enzyme catalyses alpha-ribazole 5'-phosphate + adenosylcob(III)inamide-GDP = adenosylcob(III)alamin 5'-phosphate + GMP + H(+). It participates in cofactor biosynthesis; adenosylcobalamin biosynthesis; adenosylcobalamin from cob(II)yrinate a,c-diamide: step 7/7. In terms of biological role, joins adenosylcobinamide-GDP and alpha-ribazole to generate adenosylcobalamin (Ado-cobalamin). Also synthesizes adenosylcobalamin 5'-phosphate from adenosylcobinamide-GDP and alpha-ribazole 5'-phosphate. The polypeptide is Adenosylcobinamide-GDP ribazoletransferase (Bradyrhizobium diazoefficiens (strain JCM 10833 / BCRC 13528 / IAM 13628 / NBRC 14792 / USDA 110)).